Reading from the N-terminus, the 415-residue chain is Serine/threonine transporter SstT (415 aa).

The next 8 helical transmembrane spans lie at 23–43 (ILIGLVLGVLLALVSKPAAIA), 47–67 (LGTLFVGALKAVAPVLVLMLV), 85–105 (ILFLYLLGTFSAALTAVLFSF), 144–164 (ALLNANYIGILVWAVGLGFAL), 181–201 (AVTFIVKVVIRFAPLGIFGLV), 220–240 (LLVLVGCMLLVALVINPLLVF), 293–313 (IPLGATINMAGAAITITVLTL), and 333–353 (VVASLCACGASGVAGGSLLLI).

It belongs to the dicarboxylate/amino acid:cation symporter (DAACS) (TC 2.A.23) family.

It localises to the cell inner membrane. It carries out the reaction L-serine(in) + Na(+)(in) = L-serine(out) + Na(+)(out). The catalysed reaction is L-threonine(in) + Na(+)(in) = L-threonine(out) + Na(+)(out). Involved in the import of serine and threonine into the cell, with the concomitant import of sodium (symport system). This is Serine/threonine transporter SstT from Klebsiella pneumoniae (strain 342).